A 1865-amino-acid polypeptide reads, in one-letter code: Dedicator of cytokinesis protein 1 (1865 aa).

The 62-residue stretch at 9-70 (REEKYGVAFY…PASYIHLKEA (62 aa)) folds into the SH3 domain. One can recognise a C2 DOCK-type domain in the interval 425-609 (RNDIYVTLVQ…DSFQISTLVC (185 aa)). A DOCKER domain is found at 1207–1617 (YKEIEREEMY…VEKEYGVRIM (411 aa)). Disordered regions lie at residues 1619-1716 (SSLD…EFKP) and 1732-1865 (TISP…GIVQ). Low complexity predominate over residues 1639–1666 (PSSSRPLSVASVSSLSSDSTPSRPGSDG). Residues 1680 to 1694 (RSQDKLDKDDLEKEK) are compositionally biased toward basic and acidic residues. S1681 bears the Phosphoserine mark. Residues 1687–1695 (KDDLEKEKK) form a phosphoinositide-binding region. Residues 1695-1704 (KDKKKEKRNS) are compositionally biased toward basic residues. A compositionally biased stretch (basic and acidic residues) spans 1705–1716 (KHQEIFEKEFKP). Residues S1743, S1751, S1756, S1761, and S1764 each carry the phosphoserine modification. Low complexity predominate over residues 1756–1766 (SVSPSSPSSQQ). Phosphothreonine is present on residues T1767 and T1772. The interaction with NCK2 second and third SH3 domain (minor) stretch occupies residues 1793–1819 (ADVADVPPPLPLKGSVADYGNLMENQD). The short motif at 1799–1805 (PPPLPLK) is the SH3-binding; interaction with CRK element. The tract at residues 1820–1836 (LLGSPTPPPPPPHQRHL) is interaction with NCK2 third SH3 domain (major). Pro residues predominate over residues 1824–1851 (PTPPPPPPHQRHLPPPLPSKTPPPPPPK). Positions 1837 to 1852 (PPPLPSKTPPPPPPKT) are interaction with NCK2 (minor). The SH3-binding; interaction with CRK signature appears at 1838 to 1843 (PPLPSK). The segment covering 1855 to 1865 (KQASVDSGIVQ) has biased composition (polar residues). S1858 carries the post-translational modification Phosphoserine.

This sequence belongs to the DOCK family. As to quaternary structure, interacts with the SH3 domains of CRK and NCK2 via multiple sites. Interacts with nucleotide-free RAC1 via its DOCKER domain. Interacts with ELMO1, ELMO2 and probably ELMO3 via its SH3 domain. Interacts with ADGRB1. Identified in a complex with AUTS2 and ELMO2. Highly expressed in placenta, lung, kidney, pancreas and ovary. Expressed at intermediate level in thymus, testes and colon.

It localises to the cytoplasm. The protein localises to the membrane. Functionally, involved in cytoskeletal rearrangements required for phagocytosis of apoptotic cells and cell motility. Along with DOCK1, mediates CRK/CRKL regulation of epithelial and endothelial cell spreading and migration on type IV collagen. Functions as a guanine nucleotide exchange factor (GEF), which activates Rac Rho small GTPases by exchanging bound GDP for free GTP. Its GEF activity may be enhanced by ELMO1. The polypeptide is Dedicator of cytokinesis protein 1 (DOCK1) (Homo sapiens (Human)).